The following is a 257-amino-acid chain: Dihydroorotate dehydrogenase B (NAD(+)), electron transfer subunit (257 aa).

The region spanning 2-101 (IRQEKMRVVS…LGPIGNGFPV (100 aa)) is the FAD-binding FR-type domain. Residues 52-55 (RPIS), 69-71 (IYR), and 76-77 (GT) contribute to the FAD site. [2Fe-2S] cluster is bound by residues cysteine 220, cysteine 225, cysteine 228, and cysteine 244.

The protein belongs to the PyrK family. Heterotetramer of 2 PyrK and 2 PyrD type B subunits. It depends on [2Fe-2S] cluster as a cofactor. FAD serves as cofactor.

It functions in the pathway pyrimidine metabolism; UMP biosynthesis via de novo pathway; orotate from (S)-dihydroorotate (NAD(+) route): step 1/1. Functionally, responsible for channeling the electrons from the oxidation of dihydroorotate from the FMN redox center in the PyrD type B subunit to the ultimate electron acceptor NAD(+). The polypeptide is Dihydroorotate dehydrogenase B (NAD(+)), electron transfer subunit (Lysinibacillus sphaericus (strain C3-41)).